The chain runs to 57 residues: Potassium channel toxin KTx1 (57 aa).

The signal sequence occupies residues 1-13 (FLVLLLVSLMCYA). A propeptide spanning residues 14 to 18 (EIAEG) is cleaved from the precursor. 3 disulfides stabilise this stretch: C24-C37, C30-C42, and C36-C51.

The protein belongs to the scorpion calcin-like family. KTX subfamily. As to expression, expressed by the venom gland.

It localises to the secreted. In terms of biological role, this recombinant peptide inhibits voltage-gated potassium channels mKv1.3/KCNA3 (IC(50)=1.70 uM), mKv1.1/KCNA1 (10 uM inhibits 40% of currents) and hKv1.2/KCNA2 (10 uM inhibits 42% of currents). May also increase intracellular calcium release through the activation of nuclear inositol 1,4,5-trisphosphate receptors (ITPR) of cardiomyocytes, thereby causing an increase in the contraction frequency of these cells. The protein is Potassium channel toxin KTx1 of Isometrus maculatus (Lesser brown scorpion).